A 183-amino-acid chain; its full sequence is uncharacterized protein (183 aa).

This sequence belongs to the asfivirus S183L family.

This is an uncharacterized protein from Ornithodoros (relapsing fever ticks).